The following is a 262-amino-acid chain: Acyl-[acyl-carrier-protein]--UDP-N-acetylglucosamine O-acyltransferase (262 aa).

It belongs to the transferase hexapeptide repeat family. LpxA subfamily. Homotrimer.

Its subcellular location is the cytoplasm. The enzyme catalyses a (3R)-hydroxyacyl-[ACP] + UDP-N-acetyl-alpha-D-glucosamine = a UDP-3-O-[(3R)-3-hydroxyacyl]-N-acetyl-alpha-D-glucosamine + holo-[ACP]. The protein operates within glycolipid biosynthesis; lipid IV(A) biosynthesis; lipid IV(A) from (3R)-3-hydroxytetradecanoyl-[acyl-carrier-protein] and UDP-N-acetyl-alpha-D-glucosamine: step 1/6. Its function is as follows. Involved in the biosynthesis of lipid A, a phosphorylated glycolipid that anchors the lipopolysaccharide to the outer membrane of the cell. The chain is Acyl-[acyl-carrier-protein]--UDP-N-acetylglucosamine O-acyltransferase from Burkholderia multivorans (strain ATCC 17616 / 249).